Consider the following 141-residue polypeptide: Large ribosomal subunit protein uL11 (141 aa).

This sequence belongs to the universal ribosomal protein uL11 family. As to quaternary structure, part of the ribosomal stalk of the 50S ribosomal subunit. Interacts with L10 and the large rRNA to form the base of the stalk. L10 forms an elongated spine to which L12 dimers bind in a sequential fashion forming a multimeric L10(L12)X complex. One or more lysine residues are methylated.

Forms part of the ribosomal stalk which helps the ribosome interact with GTP-bound translation factors. This chain is Large ribosomal subunit protein uL11, found in Moorella thermoacetica (strain ATCC 39073 / JCM 9320).